The chain runs to 155 residues: Ribosome maturation factor RimP (155 aa).

It belongs to the RimP family.

It localises to the cytoplasm. Its function is as follows. Required for maturation of 30S ribosomal subunits. This Listeria monocytogenes serovar 1/2a (strain ATCC BAA-679 / EGD-e) protein is Ribosome maturation factor RimP.